Consider the following 355-residue polypeptide: DNA-directed RNA polymerase subunit alpha (355 aa).

The alpha N-terminal domain (alpha-NTD) stretch occupies residues 1–248 (MYYDDGIPVF…EQLQPFISSD (248 aa)). An alpha C-terminal domain (alpha-CTD) region spans residues 267-355 (YDPILLRKVD…ELARQHTDED (89 aa)).

The protein belongs to the RNA polymerase alpha chain family. Homodimer. The RNAP catalytic core consists of 2 alpha, 1 beta, 1 beta' and 1 omega subunit. When a sigma factor is associated with the core the holoenzyme is formed, which can initiate transcription.

The catalysed reaction is RNA(n) + a ribonucleoside 5'-triphosphate = RNA(n+1) + diphosphate. In terms of biological role, DNA-dependent RNA polymerase catalyzes the transcription of DNA into RNA using the four ribonucleoside triphosphates as substrates. The polypeptide is DNA-directed RNA polymerase subunit alpha (Wolbachia sp. subsp. Brugia malayi (strain TRS)).